The following is a 29-amino-acid chain: Conotoxin Bu17 (29 aa).

3 disulfides stabilise this stretch: C4–C19, C5–C25, and C15–C26. Cysteine amide is present on C26.

The protein belongs to the conotoxin M superfamily. As to expression, expressed by the venom duct.

It localises to the secreted. This chain is Conotoxin Bu17, found in Conus bullatus (Bubble cone).